A 239-amino-acid polypeptide reads, in one-letter code: MAVVTLAEMMEAGAHFGHQTRRWNPKMSRYIYCARNGVHIIDLVQTAVCMNNAYKWTRSAARSGKRFLFVGTKKQASEVVALEAARCGAAYVNQRWLGGMLTNWTTMKARIDRLKDLERMESSGAIAMRPKKEGAVLRRELERLQKYLGGLKTMRRLPDVVVLVDQRRESNAVLEARKLDIPLVSMLDTNCDPDLCEVPIPCNDDAVRSVQLVLGRLADAINEGRHGNNEQRGGGDAEG.

Belongs to the universal ribosomal protein uS2 family.

This Parasynechococcus marenigrum (strain WH8102) protein is Small ribosomal subunit protein uS2.